Consider the following 515-residue polypeptide: Maturase K (515 aa).

It belongs to the intron maturase 2 family. MatK subfamily.

It is found in the plastid. The protein localises to the chloroplast. Usually encoded in the trnK tRNA gene intron. Probably assists in splicing its own and other chloroplast group II introns. In Trillium pusillum (Dwarf wakerobin), this protein is Maturase K.